The sequence spans 2136 residues: Protein Ycf2 (2136 aa).

Residue 1404–1411 (GPIETGRS) participates in ATP binding.

The protein belongs to the Ycf2 family.

It localises to the plastid. The protein localises to the chloroplast stroma. Its function is as follows. Probable ATPase of unknown function. Its presence in a non-photosynthetic plant (Epifagus virginiana) and experiments in tobacco indicate that it has an essential function which is probably not related to photosynthesis. The polypeptide is Protein Ycf2 (Marchantia polymorpha (Common liverwort)).